Here is a 356-residue protein sequence, read N- to C-terminus: Glutamine synthetase cytosolic isozyme 1-4 (356 aa).

Serine 2 is subject to N-acetylserine. A phosphoserine mark is found at serine 2 and serine 48. The region spanning isoleucine 19–glycine 99 is the GS beta-grasp domain. A disordered region spans residues alanine 37–aspartate 66. The GS catalytic domain maps to lysine 106–proline 356.

It belongs to the glutamine synthetase family. Homooctamer. Interacts with GRF3. Expressed in the pericycle in the region of lateral root emergence.

It localises to the cytoplasm. It catalyses the reaction L-glutamate + NH4(+) + ATP = L-glutamine + ADP + phosphate + H(+). Functionally, high-affinity glutamine synthetase. May contribute to the homeostatic control of glutamine synthesis in roots. The sequence is that of Glutamine synthetase cytosolic isozyme 1-4 from Arabidopsis thaliana (Mouse-ear cress).